We begin with the raw amino-acid sequence, 415 residues long: Probable disease resistance protein At5g66890 (415 aa).

The region spanning 8 to 43 is the NB-ARC domain; the sequence is SFDALPHNLRECFLDMASFLEDQRIIASTIIDLWSA. LRR repeat units lie at residues 229–251, 256–278, 280–303, 304–326, 328–351, and 352–373; these read SLEK…EDVS, SLQE…ISQV, SLKK…GDLR, DLET…IDRL, NLRF…GKLK, and KLEK…VKNL. Residues 239–260 are a coiled coil; the sequence is HVVDALNELEDVSETLQSLQEI.

The protein belongs to the disease resistance NB-LRR family.

Possible disease resistance protein. The polypeptide is Probable disease resistance protein At5g66890 (Arabidopsis thaliana (Mouse-ear cress)).